Here is a 556-residue protein sequence, read N- to C-terminus: MASTLQVSSRKCKNCGSTDFVRDISNTTNELICKVCGLVTEENSIVSEVTFGEASNGAAVIQGAFVSANQAHPTFMSHSGQNALMSRETTLNNARRKLKAVSYALNIPEYVTDAAFQWYRLALSNNFVQGRKSQNVIAACLYIACRKERTHHMLIDFSSRLQVSVYSIGATFLKLAKKLQIVKLPLADPSLFIQHFAEKLELGDKKIKVIRDAVKLAQTMSRDWMYEGRRPAGIAGACLLLACRMNNLRRTHSEIVAISHVAEETLQQRLNEFKNTTSAKLSVKEFRDDETEVNEGERSAESKPPSFDKNRLKEKKIKDSLDTKEMLETSEEAVSRNPILTQVLGAQELSSKEVLYYLKKLSERRKAEFSRIKATHGIDGEDLHKTEKDKKRSLDEIDGYSLEKDPYRPRNLHLLPTTASLLSKVSDHPENLDDVDDAELDSHLLDEEASKLKERIWIDINGDYLIEQESKRLKQEADLASGNTSLRKKRSKRTNRNQSSASIVKVQVDGLPLDVSVDDADAVDVVAAGGVKNLLQKTTFSKKINYDAINGLFGQK.

The TFIIB-type zinc finger occupies 8 to 41 (SSRKCKNCGSTDFVRDISNTTNELICKVCGLVTE). Residues cysteine 12, cysteine 15, cysteine 33, and cysteine 36 each contribute to the Zn(2+) site. Tandem repeats lie at residues 98–174 (LKAV…TFLK) and 193–272 (IQHF…RLNE). The interaction with TBP and with the Pol III subunit C34 stretch occupies residues 98 to 272 (LKAVSYALNI…EETLQQRLNE (175 aa)). Residues 284–556 (KEFRDDETEV…DAINGLFGQK (273 aa)) form an interaction with TBP region. Disordered stretches follow at residues 287-309 (RDDE…SFDK) and 477-501 (ADLA…QSSA). Residues 295–309 (EGERSAESKPPSFDK) are compositionally biased toward basic and acidic residues. A compositionally biased stretch (basic residues) spans 486–495 (LRKKRSKRTN).

It belongs to the TFIIB family. TFIIIB comprises the TATA-binding protein (TBP), the B-related factor (BRF) and a 70 kDa polypeptide.

It is found in the nucleus. Its function is as follows. General activator of RNA polymerase III transcription. Interacts with TBP. Binds to Pol III subunit C34 and to the TAU135 component of TFIIIC. The polypeptide is Transcription factor IIIB 70 kDa subunit (TDS4) (Kluyveromyces lactis (strain ATCC 8585 / CBS 2359 / DSM 70799 / NBRC 1267 / NRRL Y-1140 / WM37) (Yeast)).